Reading from the N-terminus, the 915-residue chain is Isoleucine--tRNA ligase (915 aa).

A 'HIGH' region motif is present at residues 64–74 (PYANGNFHVGH). L-isoleucyl-5'-AMP is bound at residue Glu557. The 'KMSKS' region motif lies at 598–602 (AMSKS). Residue Lys601 coordinates ATP. Residues Cys887, Cys890, Cys902, and Cys905 each coordinate Zn(2+).

Belongs to the class-I aminoacyl-tRNA synthetase family. IleS type 1 subfamily. Monomer. It depends on Zn(2+) as a cofactor.

Its subcellular location is the cytoplasm. The enzyme catalyses tRNA(Ile) + L-isoleucine + ATP = L-isoleucyl-tRNA(Ile) + AMP + diphosphate. Functionally, catalyzes the attachment of isoleucine to tRNA(Ile). As IleRS can inadvertently accommodate and process structurally similar amino acids such as valine, to avoid such errors it has two additional distinct tRNA(Ile)-dependent editing activities. One activity is designated as 'pretransfer' editing and involves the hydrolysis of activated Val-AMP. The other activity is designated 'posttransfer' editing and involves deacylation of mischarged Val-tRNA(Ile). The sequence is that of Isoleucine--tRNA ligase from Leptospira biflexa serovar Patoc (strain Patoc 1 / ATCC 23582 / Paris).